A 253-amino-acid polypeptide reads, in one-letter code: Bridging integrator 3 (253 aa).

The 224-residue stretch at 9 to 232 folds into the BAR domain; that stretch reads GQPKKQIVSK…LDQPGHSDEQ (224 aa). Coiled coils occupy residues 16–57 and 120–151; these read VSKT…AMSK and SLNM…KEKT. The disordered stretch occupies residues 222–241; that stretch reads QLDQPGHSDEQRERENETKL. Positions 227 to 241 are enriched in basic and acidic residues; that stretch reads GHSDEQRERENETKL.

It localises to the cytoplasm. The protein resides in the cytoskeleton. Its function is as follows. Involved in cytokinesis and septation where it has a role in the localization of F-actin. This chain is Bridging integrator 3 (Bin3), found in Mus musculus (Mouse).